The chain runs to 718 residues: Serine/threonine-protein kinase PAK 5 (718 aa).

5 disordered regions span residues 1-29 (MFGK…DPQE), 96-119 (RSNS…IQGH), 226-245 (SPLD…TSRC), 264-296 (YDRR…QEPM), and 339-371 (VFSP…SSSH). In terms of domain architecture, CRIB spans 11–24 (ISGPSNFEHRVHTG). The interval 25–447 (FDPQEQKFTG…VVSPGDPREY (423 aa)) is linker. The residue at position 104 (Ser-104) is a Phosphoserine. Thr-107 carries the phosphothreonine modification. Positions 226 to 244 (SPLDYSFQLTPSRTAGTSR) are enriched in polar residues. Residues 359-371 (QSQSKVGYSSSSH) are compositionally biased toward low complexity. One can recognise a Protein kinase domain in the interval 448–699 (LDNFIKIGEG…AQELLGHPFL (252 aa)). Residues 454–462 (IGEGSTGIV) and Lys-477 contribute to the ATP site. Asp-567 serves as the catalytic Proton acceptor.

This sequence belongs to the protein kinase superfamily. STE Ser/Thr protein kinase family. STE20 subfamily. As to quaternary structure, interacts tightly with GTP-bound but not GDP-bound CDC42/p21 and RAC1. Interacts with MARK2, leading to inhibit MARK2 independently of kinase activity. Interacts with RHOD and RHOH. In terms of processing, autophosphorylated when activated by CDC42/p21.

The protein localises to the mitochondrion. Its subcellular location is the cytoplasm. The protein resides in the nucleus. It catalyses the reaction L-seryl-[protein] + ATP = O-phospho-L-seryl-[protein] + ADP + H(+). It carries out the reaction L-threonyl-[protein] + ATP = O-phospho-L-threonyl-[protein] + ADP + H(+). In terms of biological role, serine/threonine protein kinase that plays a role in a variety of different signaling pathways including cytoskeleton regulation, cell migration, proliferation or cell survival. Activation by various effectors including growth factor receptors or active CDC42 and RAC1 results in a conformational change and a subsequent autophosphorylation on several serine and/or threonine residues. Phosphorylates the proto-oncogene RAF and stimulates its kinase activity. Promotes cell survival by phosphorylating the BCL2 antagonist of cell death BAD. Phosphorylates CTNND1, probably to regulate cytoskeletal organization and cell morphology. Keeps microtubules stable through MARK2 inhibition and destabilizes the F-actin network leading to the disappearance of stress fibers and focal adhesions. This Rattus norvegicus (Rat) protein is Serine/threonine-protein kinase PAK 5 (Pak5).